Consider the following 438-residue polypeptide: Adenosylhomocysteinase (438 aa).

Substrate contacts are provided by threonine 64, aspartate 139, and glutamate 164. 165–167 (TTT) is a binding site for NAD(+). Positions 194 and 198 each coordinate substrate. NAD(+)-binding positions include asparagine 199, 228 to 233 (GYGDVG), glutamate 251, asparagine 286, 307 to 309 (IGH), and asparagine 352.

It belongs to the adenosylhomocysteinase family. NAD(+) serves as cofactor.

It localises to the cytoplasm. It carries out the reaction S-adenosyl-L-homocysteine + H2O = L-homocysteine + adenosine. The protein operates within amino-acid biosynthesis; L-homocysteine biosynthesis; L-homocysteine from S-adenosyl-L-homocysteine: step 1/1. Functionally, may play a key role in the regulation of the intracellular concentration of adenosylhomocysteine. The protein is Adenosylhomocysteinase of Coxiella burnetii (strain Dugway 5J108-111).